The following is a 195-amino-acid chain: Xanthine phosphoribosyltransferase (195 aa).

Xanthine contacts are provided by Leu-20 and Asn-27. 5-phospho-alpha-D-ribose 1-diphosphate is bound at residue 128 to 132 (ANGQA). Position 156 (Lys-156) interacts with xanthine.

Belongs to the purine/pyrimidine phosphoribosyltransferase family. Xpt subfamily. Homodimer.

It localises to the cytoplasm. The enzyme catalyses XMP + diphosphate = xanthine + 5-phospho-alpha-D-ribose 1-diphosphate. It functions in the pathway purine metabolism; XMP biosynthesis via salvage pathway; XMP from xanthine: step 1/1. In terms of biological role, converts the preformed base xanthine, a product of nucleic acid breakdown, to xanthosine 5'-monophosphate (XMP), so it can be reused for RNA or DNA synthesis. The protein is Xanthine phosphoribosyltransferase of Latilactobacillus sakei subsp. sakei (strain 23K) (Lactobacillus sakei subsp. sakei).